The following is a 188-amino-acid chain: Holliday junction branch migration complex subunit RuvA (188 aa).

Residues 1-63 (MIEIIEGIYK…QEDMTIYGFD (63 aa)) are domain I. The segment at 64-142 (SKVKKETFEK…VVEVNEEMLE (79 aa)) is domain II. A region of interest (flexible linker) is located at residue E142. The domain III stretch occupies residues 142–188 (EAIEALVSLGYSKTQARNAVSKVLKESPNISNVSKIIKEALKILAKI).

Belongs to the RuvA family. Homotetramer. Forms an RuvA(8)-RuvB(12)-Holliday junction (HJ) complex. HJ DNA is sandwiched between 2 RuvA tetramers; dsDNA enters through RuvA and exits via RuvB. An RuvB hexamer assembles on each DNA strand where it exits the tetramer. Each RuvB hexamer is contacted by two RuvA subunits (via domain III) on 2 adjacent RuvB subunits; this complex drives branch migration. In the full resolvosome a probable DNA-RuvA(4)-RuvB(12)-RuvC(2) complex forms which resolves the HJ.

It is found in the cytoplasm. Functionally, the RuvA-RuvB-RuvC complex processes Holliday junction (HJ) DNA during genetic recombination and DNA repair, while the RuvA-RuvB complex plays an important role in the rescue of blocked DNA replication forks via replication fork reversal (RFR). RuvA specifically binds to HJ cruciform DNA, conferring on it an open structure. The RuvB hexamer acts as an ATP-dependent pump, pulling dsDNA into and through the RuvAB complex. HJ branch migration allows RuvC to scan DNA until it finds its consensus sequence, where it cleaves and resolves the cruciform DNA. The polypeptide is Holliday junction branch migration complex subunit RuvA (Fervidobacterium nodosum (strain ATCC 35602 / DSM 5306 / Rt17-B1)).